Reading from the N-terminus, the 404-residue chain is Cysteine desulfurase IscS (404 aa).

Residues 75-76 (AT), N155, Q183, and 203-205 (SAH) each bind pyridoxal 5'-phosphate. K206 bears the N6-(pyridoxal phosphate)lysine mark. T243 provides a ligand contact to pyridoxal 5'-phosphate. Residue C328 is the Cysteine persulfide intermediate of the active site. [2Fe-2S] cluster is bound at residue C328.

The protein belongs to the class-V pyridoxal-phosphate-dependent aminotransferase family. NifS/IscS subfamily. Homodimer. Forms a heterotetramer with IscU, interacts with other sulfur acceptors. Requires pyridoxal 5'-phosphate as cofactor.

The protein localises to the cytoplasm. It catalyses the reaction (sulfur carrier)-H + L-cysteine = (sulfur carrier)-SH + L-alanine. It participates in cofactor biosynthesis; iron-sulfur cluster biosynthesis. Master enzyme that delivers sulfur to a number of partners involved in Fe-S cluster assembly, tRNA modification or cofactor biosynthesis. Catalyzes the removal of elemental sulfur atoms from cysteine to produce alanine. Functions as a sulfur delivery protein for Fe-S cluster synthesis onto IscU, an Fe-S scaffold assembly protein, as well as other S acceptor proteins. The sequence is that of Cysteine desulfurase IscS from Aeromonas hydrophila subsp. hydrophila (strain ATCC 7966 / DSM 30187 / BCRC 13018 / CCUG 14551 / JCM 1027 / KCTC 2358 / NCIMB 9240 / NCTC 8049).